A 273-amino-acid chain; its full sequence is Putative phosphoenolpyruvate synthase regulatory protein (273 aa).

Residue 153–160 (GVSRSGKT) coordinates ADP.

Belongs to the pyruvate, phosphate/water dikinase regulatory protein family. PSRP subfamily.

The catalysed reaction is [pyruvate, water dikinase] + ADP = [pyruvate, water dikinase]-phosphate + AMP + H(+). It carries out the reaction [pyruvate, water dikinase]-phosphate + phosphate + H(+) = [pyruvate, water dikinase] + diphosphate. Functionally, bifunctional serine/threonine kinase and phosphorylase involved in the regulation of the phosphoenolpyruvate synthase (PEPS) by catalyzing its phosphorylation/dephosphorylation. In Leptothrix cholodnii (strain ATCC 51168 / LMG 8142 / SP-6) (Leptothrix discophora (strain SP-6)), this protein is Putative phosphoenolpyruvate synthase regulatory protein.